Here is a 414-residue protein sequence, read N- to C-terminus: Phosphoglycerate kinase (414 aa).

Substrate-binding positions include 19–21, R34, 57–60, R114, and R154; these read DLN and HQSK. Residues E332 and 358–361 contribute to the ATP site; that span reads GGHS.

This sequence belongs to the phosphoglycerate kinase family. Monomer.

It is found in the cytoplasm. It carries out the reaction (2R)-3-phosphoglycerate + ATP = (2R)-3-phospho-glyceroyl phosphate + ADP. Its pathway is carbohydrate degradation; glycolysis; pyruvate from D-glyceraldehyde 3-phosphate: step 2/5. The chain is Phosphoglycerate kinase from Thermococcus onnurineus (strain NA1).